We begin with the raw amino-acid sequence, 105 residues long: Heat shock protein HspQ (105 aa).

It belongs to the HspQ family.

The protein localises to the cytoplasm. Its function is as follows. Involved in the degradation of certain denaturated proteins, including DnaA, during heat shock stress. This chain is Heat shock protein HspQ, found in Yersinia enterocolitica serotype O:8 / biotype 1B (strain NCTC 13174 / 8081).